We begin with the raw amino-acid sequence, 361 residues long: Alanine racemase (361 aa).

Lys-34 serves as the catalytic Proton acceptor; specific for D-alanine. At Lys-34 the chain carries N6-(pyridoxal phosphate)lysine. Arg-129 contributes to the substrate binding site. Tyr-256 acts as the Proton acceptor; specific for L-alanine in catalysis. Met-304 provides a ligand contact to substrate.

Belongs to the alanine racemase family. It depends on pyridoxal 5'-phosphate as a cofactor.

The catalysed reaction is L-alanine = D-alanine. The protein operates within amino-acid biosynthesis; D-alanine biosynthesis; D-alanine from L-alanine: step 1/1. In terms of biological role, catalyzes the interconversion of L-alanine and D-alanine. May also act on other amino acids. This chain is Alanine racemase (alr), found in Corynebacterium glutamicum (strain R).